The sequence spans 666 residues: DNA mismatch repair protein MutL (666 aa).

This sequence belongs to the DNA mismatch repair MutL/HexB family.

Its function is as follows. This protein is involved in the repair of mismatches in DNA. It is required for dam-dependent methyl-directed DNA mismatch repair. May act as a 'molecular matchmaker', a protein that promotes the formation of a stable complex between two or more DNA-binding proteins in an ATP-dependent manner without itself being part of a final effector complex. The polypeptide is DNA mismatch repair protein MutL (Clostridium botulinum (strain Okra / Type B1)).